Consider the following 209-residue polypeptide: Cytidylate kinase (209 aa).

An ATP-binding site is contributed by 9–17; it reads GPAAAGKGT.

This sequence belongs to the cytidylate kinase family. Type 1 subfamily.

It is found in the cytoplasm. It carries out the reaction CMP + ATP = CDP + ADP. It catalyses the reaction dCMP + ATP = dCDP + ADP. This is Cytidylate kinase from Granulibacter bethesdensis (strain ATCC BAA-1260 / CGDNIH1).